Reading from the N-terminus, the 234-residue chain is Triosephosphate isomerase (234 aa).

8-10 (NFK) contributes to the substrate binding site. Catalysis depends on His-90, which acts as the Electrophile. The active-site Proton acceptor is Glu-159. Substrate-binding positions include Gly-165, Ser-197, and 218 to 219 (GS).

Homodimer.

The protein resides in the cytoplasm. The enzyme catalyses D-glyceraldehyde 3-phosphate = dihydroxyacetone phosphate. It participates in carbohydrate biosynthesis; gluconeogenesis. Its pathway is carbohydrate degradation; glycolysis; D-glyceraldehyde 3-phosphate from glycerone phosphate: step 1/1. Involved in the gluconeogenesis. Catalyzes stereospecifically the conversion of dihydroxyacetone phosphate (DHAP) to D-glyceraldehyde-3-phosphate (G3P). The sequence is that of Triosephosphate isomerase from Helicobacter pylori (strain ATCC 700392 / 26695) (Campylobacter pylori).